We begin with the raw amino-acid sequence, 306 residues long: Ornithine carbamoyltransferase (306 aa).

Carbamoyl phosphate contacts are provided by residues 53–56 (STRT), Q80, R104, and 131–134 (HPCQ). Residues N162, D220, and 224–225 (SM) each bind L-ornithine. Residues 260–261 (CL) and R288 each bind carbamoyl phosphate.

This sequence belongs to the aspartate/ornithine carbamoyltransferase superfamily. OTCase family.

Its subcellular location is the cytoplasm. The catalysed reaction is carbamoyl phosphate + L-ornithine = L-citrulline + phosphate + H(+). It functions in the pathway amino-acid biosynthesis; L-arginine biosynthesis; L-arginine from L-ornithine and carbamoyl phosphate: step 1/3. Its function is as follows. Reversibly catalyzes the transfer of the carbamoyl group from carbamoyl phosphate (CP) to the N(epsilon) atom of ornithine (ORN) to produce L-citrulline. The chain is Ornithine carbamoyltransferase from Methylobacillus flagellatus (strain ATCC 51484 / DSM 6875 / VKM B-1610 / KT).